A 407-amino-acid chain; its full sequence is RNA-binding motif, single-stranded-interacting protein 2 (407 aa).

Met-1 carries the post-translational modification N-acetylmethionine. Residues 29–54 (QQMAPPSPSNSTPNSSSGSNGNDQLS) form a disordered region. Low complexity predominate over residues 37–50 (SNSTPNSSSGSNGN). 2 RRM domains span residues 56-129 (TNLY…MAKQ) and 135-220 (TNLY…FADG). Ser-106 bears the Phosphoserine mark. At Thr-269 the chain carries Phosphothreonine. Phosphoserine is present on residues Ser-280 and Ser-285.

Its subcellular location is the nucleus. This is RNA-binding motif, single-stranded-interacting protein 2 (RBMS2) from Homo sapiens (Human).